The sequence spans 591 residues: MKKISLPKIGIRPVIDGRRMGVRESLEEQTMNMAKATAALLTEKLRHACGAAVECVISDTCIAGMAEAAACEEKFSSQNVGLTITVTPCWCYGSETIDMDPTRPKAIWGFNGTERPGAVYLAAALAAHSQKGIPAFSIYGHDVQDADDTSIPADVEEKLLRFARAGLAVASMKGKSYLSLGGVSMGIAGSIVDHNFFESWLGMKVQAVDMTELRRRIDQKIYDEAELEMALTWADKNFRYGEDENNKQYQRNAEQSRAVLRESLLMAMCIRDMMQGNSKLADIGRVEESLGYNAIAAGFQGQRHWTDQYPNGDTAEAILNSSFDWNGVREPFVVATENDSLNGVAMLMGHQLTGTAQVFADVRTYWSPEAIERVTGHKLDGLAEHGIIHLINSGSAALDGSCKQRDSEGNPTMKPHWEISQQEADACLAATEWCPAIHEYFRGGGYSSRFLTEGGVPFTMTRVNIIKGLGPVLQIAEGWSVELPKDVHDILNKRTNSTWPTTWFAPRLTGKGPFTDVYSVMANWGANHGVLTIGHVGADFITLASMLRIPVCMHNVEETKVYRPSAWAAHGMDIEGQDYRACQNYGPLYKR.

Catalysis depends on proton acceptor residues Glu337 and Asp361. Positions 337, 361, and 528 each coordinate Mn(2+).

It belongs to the L-fucose isomerase family. In terms of assembly, homohexamer. Mn(2+) is required as a cofactor.

It is found in the cytoplasm. The catalysed reaction is L-fucose = L-fuculose. The protein operates within carbohydrate degradation; L-fucose degradation; L-lactaldehyde and glycerone phosphate from L-fucose: step 1/3. Its function is as follows. Converts the aldose L-fucose into the corresponding ketose L-fuculose. This Escherichia coli (strain 55989 / EAEC) protein is L-fucose isomerase.